A 205-amino-acid polypeptide reads, in one-letter code: Hydrogenase-4 component A (205 aa).

4Fe-4S ferredoxin-type domains lie at 2–31 (NRFV…TQGL), 41–72 (KTST…SQRD), 73–102 (DAIQ…ASGS), and 140–172 (QTVA…LITG). 16 residues coordinate [4Fe-4S] cluster: Cys-12, Cys-15, Cys-18, Cys-22, Cys-51, Cys-54, Cys-59, Cys-63, Cys-82, Cys-85, Cys-88, Cys-92, Cys-146, Cys-149, Cys-158, and Cys-162.

[4Fe-4S] cluster serves as cofactor.

Functionally, probable electron transfer protein for hydrogenase 4. In Escherichia coli (strain K12), this protein is Hydrogenase-4 component A.